The following is a 392-amino-acid chain: MLRWLTAGESHGPSLVAILEGLPAHVQVTSDDVADALARRRLGYGRGARMKFERDEVTLVGGIRHGETMGGPVAIEIGNTEWPKWEKVMAADPVDPVELESLARNAPLTRPRPGHADLVGMQKYDFTEARPILERASARETAARVALGRVASNLLEQAVGARIVSHVIELGGVRAPAGLWPQPEDVDRLDDDPVRCLDADTSKLMVEAIDQAHQDGDTLGGVVEVVVHGLPPGLGSHVHWDRRLDARLAGALMGIQAIKGVEVGDGFELAATPGSRAHDEIVSGTDGLRRVSGRSGGTEGGMSTGEVLRVRAAMKPIATVPRALRTVDVATGEAAVAHHQRSDVCAVPAAGIVAEAMVALVLADAVLEKFGGDSVRETRRNAEGYLDTLRFR.

NADP(+) contacts are provided by Arg-40 and Arg-46. FMN contacts are provided by residues 135–137 (RAS), 256–257 (QA), Gly-300, 315–319 (KPIAT), and Arg-341.

It belongs to the chorismate synthase family. As to quaternary structure, homotetramer. Requires FMNH2 as cofactor.

The catalysed reaction is 5-O-(1-carboxyvinyl)-3-phosphoshikimate = chorismate + phosphate. It participates in metabolic intermediate biosynthesis; chorismate biosynthesis; chorismate from D-erythrose 4-phosphate and phosphoenolpyruvate: step 7/7. Its function is as follows. Catalyzes the anti-1,4-elimination of the C-3 phosphate and the C-6 proR hydrogen from 5-enolpyruvylshikimate-3-phosphate (EPSP) to yield chorismate, which is the branch point compound that serves as the starting substrate for the three terminal pathways of aromatic amino acid biosynthesis. This reaction introduces a second double bond into the aromatic ring system. This is Chorismate synthase from Nocardioides sp. (strain ATCC BAA-499 / JS614).